A 912-amino-acid chain; its full sequence is Protein SLFN14 (912 aa).

Residues Glu-206 to Gln-391 form a required for endoribonuclease activity region. Residues Arg-392–Leu-571 are required for ribosome binding. Residue Cys-593–Thr-600 participates in ATP binding.

The protein belongs to the Schlafen family. Subgroup III subfamily. Associates with ribosomes in an ATP-independent manner. Mg(2+) is required as a cofactor. It depends on Mn(2+) as a cofactor. Expressed in megakaryocytes and platelets (at protein level). Weakly expressed in melanocytes and malignant melanoma cells.

The protein resides in the nucleus. Functionally, shows no ribosome-associated and endoribonuclease activities. Displays polysome-associated endoribonuclease activity towards mRNAs and rRNAs. May play a role in RNA surveillance pathways by recognizing stalled ribosomes and triggering endonucleolytic cleavage of aberrant mRNAs. Cleaves different types of rRNAs and mRNAs in a magnesium- and manganese-dependent and ATP-independent manner. Involved in correct maturation of megakaryocytes and especially important for proplatelet extension. This chain is Protein SLFN14, found in Homo sapiens (Human).